The following is a 596-amino-acid chain: Chaperone protein DnaK (596 aa).

Threonine 174 is modified (phosphothreonine; by autocatalysis). The disordered stretch occupies residues 576-596 (ANATKDQSSKDQEEVATVVEE).

This sequence belongs to the heat shock protein 70 family.

Acts as a chaperone. In Mycoplasmopsis synoviae (strain 53) (Mycoplasma synoviae), this protein is Chaperone protein DnaK.